A 601-amino-acid chain; its full sequence is DNA ligase (601 aa).

Asp258 provides a ligand contact to ATP. The N6-AMP-lysine intermediate role is filled by Lys260. ATP-binding residues include Arg265, Arg280, Glu310, Phe350, Arg427, and Lys433. Positions 568–601 are disordered; it reads DKSPEDATTTDEILEMYNKQPKKKIESPPIDESV.

This sequence belongs to the ATP-dependent DNA ligase family. Mg(2+) serves as cofactor.

The catalysed reaction is ATP + (deoxyribonucleotide)n-3'-hydroxyl + 5'-phospho-(deoxyribonucleotide)m = (deoxyribonucleotide)n+m + AMP + diphosphate.. Functionally, DNA ligase that seals nicks in double-stranded DNA during DNA replication, DNA recombination and DNA repair. This is DNA ligase from Saccharolobus islandicus (strain Y.G.57.14 / Yellowstone #1) (Sulfolobus islandicus).